Reading from the N-terminus, the 62-residue chain is Alpha-lytic protease L1 (62 aa).

S48 (charge relay system) is an active-site residue.

The protein belongs to the peptidase S1 family. As to quaternary structure, monomer.

It is found in the secreted. It catalyses the reaction Preferential cleavage: Ala-|-Xaa, Val-|-Xaa in bacterial cell walls, elastin and other proteins.. Its activity is regulated as follows. Inhibited by phenylmethanesulfonyl fluoride (PMSF) and p-chloromercuribenzoate (PCMB). Functionally, has bacteriolytic activity. The protein is Alpha-lytic protease L1 of Lysobacter sp. (strain XL1).